The primary structure comprises 432 residues: Transcriptional adapter 3 (432 aa).

Positions 40–69 form a coiled coil; it reads IEELDTLQLELETLLSSASRRLRVLEAETQ. 2 disordered regions span residues 88–127 and 275–313; these read KEHELGTPIKHSKPKKQKLDGKGSHASGPGPGRPKSRNMQ and SPVEDSPIPEISGKESGTDGASTSPRSQNKPFSAPHTKS. Residues 293–305 are compositionally biased toward polar residues; sequence DGASTSPRSQNKP. Positions 367–407 form a coiled coil; it reads LLRLAKEEMNRQELRQRVRMADNEVMDAFRKIMAARQKKRT.

It belongs to the NGG1 family.

Its subcellular location is the nucleus. Functions as a component of the PCAF complex. The PCAF complex is capable of efficiently acetylating histones in a nucleosomal context. This Xenopus tropicalis (Western clawed frog) protein is Transcriptional adapter 3 (tada3).